The sequence spans 378 residues: Succinyl-diaminopimelate desuccinylase (378 aa).

Residue His67 coordinates Zn(2+). Asp69 is an active-site residue. Asp100 is a binding site for Zn(2+). Glu134 (proton acceptor) is an active-site residue. 3 residues coordinate Zn(2+): Glu135, Glu163, and His349.

Belongs to the peptidase M20A family. DapE subfamily. As to quaternary structure, homodimer. Zn(2+) is required as a cofactor. Co(2+) serves as cofactor.

The catalysed reaction is N-succinyl-(2S,6S)-2,6-diaminopimelate + H2O = (2S,6S)-2,6-diaminopimelate + succinate. It participates in amino-acid biosynthesis; L-lysine biosynthesis via DAP pathway; LL-2,6-diaminopimelate from (S)-tetrahydrodipicolinate (succinylase route): step 3/3. Catalyzes the hydrolysis of N-succinyl-L,L-diaminopimelic acid (SDAP), forming succinate and LL-2,6-diaminopimelate (DAP), an intermediate involved in the bacterial biosynthesis of lysine and meso-diaminopimelic acid, an essential component of bacterial cell walls. This Nitrosospira multiformis (strain ATCC 25196 / NCIMB 11849 / C 71) protein is Succinyl-diaminopimelate desuccinylase.